A 329-amino-acid polypeptide reads, in one-letter code: GTP 3',8-cyclase (329 aa).

In terms of domain architecture, Radical SAM core spans 8-234; it reads VFARKFYYLR…QLRQRSDGPA (227 aa). Position 17 (Arg17) interacts with GTP. [4Fe-4S] cluster contacts are provided by Cys24 and Cys28. S-adenosyl-L-methionine is bound at residue Tyr30. Residue Cys31 coordinates [4Fe-4S] cluster. Arg68 lines the GTP pocket. Gly72 provides a ligand contact to S-adenosyl-L-methionine. Thr99 is a GTP binding site. Ser123 contacts S-adenosyl-L-methionine. Lys160 contributes to the GTP binding site. Met194 contributes to the S-adenosyl-L-methionine binding site. [4Fe-4S] cluster contacts are provided by Cys257 and Cys260. 262–264 lines the GTP pocket; the sequence is RLR. Position 274 (Cys274) interacts with [4Fe-4S] cluster.

It belongs to the radical SAM superfamily. MoaA family. Monomer and homodimer. Requires [4Fe-4S] cluster as cofactor.

It carries out the reaction GTP + AH2 + S-adenosyl-L-methionine = (8S)-3',8-cyclo-7,8-dihydroguanosine 5'-triphosphate + 5'-deoxyadenosine + L-methionine + A + H(+). It functions in the pathway cofactor biosynthesis; molybdopterin biosynthesis. Functionally, catalyzes the cyclization of GTP to (8S)-3',8-cyclo-7,8-dihydroguanosine 5'-triphosphate. The chain is GTP 3',8-cyclase from Shigella flexneri.